The primary structure comprises 241 residues: Zinc finger CCHC domain-containing protein 24 (241 aa).

Phosphoserine occurs at positions 65 and 93. The CCHC-type zinc finger occupies 132-149; sequence YLCHLCFNKGHYIKDCPQ.

The chain is Zinc finger CCHC domain-containing protein 24 (ZCCHC24) from Macaca fascicularis (Crab-eating macaque).